The primary structure comprises 216 residues: Large ribosomal subunit protein uL24m (216 aa).

The transit peptide at 1–9 (MRLSALLAL) directs the protein to the mitochondrion. Phosphoserine is present on Ser24. Residues 56–89 (LFCGDRVEILEGKDAGKQGKVVQVIRQRNWVVVE) form the KOW domain.

The protein belongs to the universal ribosomal protein uL24 family. As to quaternary structure, component of the mitochondrial ribosome large subunit (39S) which comprises a 16S rRNA and about 50 distinct proteins.

It localises to the mitochondrion. The chain is Large ribosomal subunit protein uL24m (MRPL24) from Bos taurus (Bovine).